We begin with the raw amino-acid sequence, 340 residues long: MPIKHAIVHLIEKKPDGTPAMLHARDAELGDSQAIENLLADLNESYNAKNKAWGFFQGESGAYPFSGWLGDYLEGDRDFVGFSREAVEHLQKLMEESNLSTGGHILFAHYQQGMTDYLAIALLHHSEGVAVNESLEVTPSRHLDLAQLHLAARINISEWRNNKQSKQYISFIKGKGGKKVSDYFRDFIGCQEGVDSPSETRTLLKAFSDFVESEDMAEEQAREKTETLVDYATSQARIGEPMTLDALSELMDDQQPRAFYDYIRNKDYGLSPEIPADKRTLNQFRRFTGRAEGLSISFEAHLLGSRIEYDEERDTLRISSLPTQLRDQLKRRKAEQESTS.

Belongs to the YejK family.

It is found in the cytoplasm. The protein localises to the nucleoid. This chain is Nucleoid-associated protein PSPA7_4451, found in Pseudomonas paraeruginosa (strain DSM 24068 / PA7) (Pseudomonas aeruginosa (strain PA7)).